We begin with the raw amino-acid sequence, 269 residues long: Hydroxyethylthiazole kinase (269 aa).

A substrate-binding site is contributed by Met-46. The ATP site is built by Arg-122 and Thr-168. Residue Gly-195 coordinates substrate.

Belongs to the Thz kinase family. Requires Mg(2+) as cofactor.

The enzyme catalyses 5-(2-hydroxyethyl)-4-methylthiazole + ATP = 4-methyl-5-(2-phosphooxyethyl)-thiazole + ADP + H(+). The protein operates within cofactor biosynthesis; thiamine diphosphate biosynthesis; 4-methyl-5-(2-phosphoethyl)-thiazole from 5-(2-hydroxyethyl)-4-methylthiazole: step 1/1. In terms of biological role, catalyzes the phosphorylation of the hydroxyl group of 4-methyl-5-beta-hydroxyethylthiazole (THZ). The chain is Hydroxyethylthiazole kinase from Chloroflexus aurantiacus (strain ATCC 29366 / DSM 635 / J-10-fl).